The sequence spans 440 residues: Probable exopolygalacturonase B (440 aa).

The first 20 residues, 1 to 20, serve as a signal peptide directing secretion; the sequence is MRLHFLPLVALCATTASSLA. N-linked (GlcNAc...) asparagine glycosylation is found at N65, N190, and N230. D260 serves as the catalytic Proton donor. C262 and C279 form a disulfide bridge. N-linked (GlcNAc...) asparagine glycans are attached at residues N268 and N280. H283 is an active-site residue. 3 N-linked (GlcNAc...) asparagine glycosylation sites follow: N307, N334, and N371. The cysteines at positions 397 and 403 are disulfide-linked. Residue N412 is glycosylated (N-linked (GlcNAc...) asparagine).

This sequence belongs to the glycosyl hydrolase 28 family.

The protein localises to the secreted. The catalysed reaction is [(1-&gt;4)-alpha-D-galacturonosyl](n) + H2O = alpha-D-galacturonate + [(1-&gt;4)-alpha-D-galacturonosyl](n-1). Specific in hydrolyzing the terminal glycosidic bond of polygalacturonic acid and oligogalacturonates. The polypeptide is Probable exopolygalacturonase B (pgxB) (Emericella nidulans (strain FGSC A4 / ATCC 38163 / CBS 112.46 / NRRL 194 / M139) (Aspergillus nidulans)).